We begin with the raw amino-acid sequence, 243 residues long: Probable transcriptional regulatory protein Smal_3128 (243 aa).

The protein belongs to the TACO1 family.

It localises to the cytoplasm. The chain is Probable transcriptional regulatory protein Smal_3128 from Stenotrophomonas maltophilia (strain R551-3).